We begin with the raw amino-acid sequence, 622 residues long: Putative E3 ubiquitin-protein ligase ORTHRUS 4 (622 aa).

A PHD-type zinc finger spans residues 12 to 62; that stretch reads DGVCMRCQVTPPSEETLTCGTCVTPWHVSCLLPESLASSTGDWECPDCSGV. An RING-type 1 zinc finger spans residues 129–169; the sequence is CSICIQLPERPVTTPCGHNFCLKCFEKWAVGQGKLTCMICR. The region spanning 258 to 407 is the YDG domain; it reads TRNQGVLVGE…HKMCRYLFVR (150 aa). The segment at 498 to 555 adopts an RING-type 2 zinc-finger fold; that stretch reads CQICRKVLSLPVTTPCAHNFCKACLEAKFAGITQLRDRSNGVRKLRAKKNIMTCPCCT. Residues 566–602 adopt a coiled-coil conformation; it reads QVNREMMEIIENFKKSEEEAEVAESSNISEEEEEESE. The tract at residues 579 to 622 is disordered; it reads KKSEEEAEVAESSNISEEEEEESEPPTKKIKMDNNSVGDTSLSA. The span at 611–622 shows a compositional bias: polar residues; the sequence is DNNSVGDTSLSA.

It is found in the nucleus. The enzyme catalyses S-ubiquitinyl-[E2 ubiquitin-conjugating enzyme]-L-cysteine + [acceptor protein]-L-lysine = [E2 ubiquitin-conjugating enzyme]-L-cysteine + N(6)-ubiquitinyl-[acceptor protein]-L-lysine.. The protein operates within protein modification; protein ubiquitination. Its function is as follows. E3 ubiquitin-protein ligase. May participate in CpG methylation-dependent transcriptional regulation. The polypeptide is Putative E3 ubiquitin-protein ligase ORTHRUS 4 (ORTH4) (Arabidopsis thaliana (Mouse-ear cress)).